The following is a 149-amino-acid chain: MRAVVQRVISSKVEVDGKVIGSIGKGLNVLLGISKEDTEEDIKYLKEKIINLRIFEDENEKLNKSLLDIGGDIIIVSQFTLYGDCRKGRRPSFIEALGGEEASILYNKFVESIKKEVNNVATGEFGADMKVYIENDGPVTILLDSRKTF.

The Gly-cisPro motif, important for rejection of L-amino acids signature appears at 137 to 138 (GP).

Belongs to the DTD family. In terms of assembly, homodimer.

It is found in the cytoplasm. It carries out the reaction glycyl-tRNA(Ala) + H2O = tRNA(Ala) + glycine + H(+). It catalyses the reaction a D-aminoacyl-tRNA + H2O = a tRNA + a D-alpha-amino acid + H(+). An aminoacyl-tRNA editing enzyme that deacylates mischarged D-aminoacyl-tRNAs. Also deacylates mischarged glycyl-tRNA(Ala), protecting cells against glycine mischarging by AlaRS. Acts via tRNA-based rather than protein-based catalysis; rejects L-amino acids rather than detecting D-amino acids in the active site. By recycling D-aminoacyl-tRNA to D-amino acids and free tRNA molecules, this enzyme counteracts the toxicity associated with the formation of D-aminoacyl-tRNA entities in vivo and helps enforce protein L-homochirality. In Clostridium botulinum (strain 657 / Type Ba4), this protein is D-aminoacyl-tRNA deacylase.